Consider the following 180-residue polypeptide: ADP-ribosylation factor 1 (180 aa).

Glycine 2 carries N-myristoyl glycine lipidation. GTP-binding positions include 24–31 (GLDAAGKT), 67–71 (DVGGQ), and 126–129 (NKQD).

Belongs to the small GTPase superfamily. Arf family.

Its subcellular location is the golgi apparatus. It carries out the reaction GTP + H2O = GDP + phosphate + H(+). Functionally, GTP-binding protein involved in protein trafficking; may modulate vesicle budding and uncoating within the Golgi apparatus. This chain is ADP-ribosylation factor 1 (arf1), found in Schizosaccharomyces pombe (strain 972 / ATCC 24843) (Fission yeast).